We begin with the raw amino-acid sequence, 206 residues long: MIRSLGKIVPETSALFICDIQSKFANHIFKFNGVVNQSKYMMRVCNELKVPIIFTEQYPKGLGHTFEDLLKERNENNQTKIFEKTLYSMCTNEVLNHLKQNHKDLKSILITGIETHVCVLQSTLDFLENGYDVHILSDAVSSNNNNDRLIALERMRQSGAFITTTESIIFQLTRDATHKSFKSIVPITKQRRDDLVADPSLSLSKM.

It belongs to the isochorismatase family.

The polypeptide is Isochorismatase family protein 1B (Dictyostelium discoideum (Social amoeba)).